Here is a 283-residue protein sequence, read N- to C-terminus: S-methyl-5'-thioadenosine phosphorylase (283 aa).

T18 provides a ligand contact to phosphate. At K51 the chain carries N6-acetyllysine. Phosphate-binding positions include 60-61 (RH) and 93-94 (TA). M196 provides a ligand contact to substrate. T197 serves as a coordination point for phosphate. Position 220–222 (220–222 (DYD)) interacts with substrate.

Belongs to the PNP/MTAP phosphorylase family. MTAP subfamily. Homotrimer.

It localises to the cytoplasm. The protein resides in the nucleus. It catalyses the reaction S-methyl-5'-thioadenosine + phosphate = 5-(methylsulfanyl)-alpha-D-ribose 1-phosphate + adenine. Its pathway is amino-acid biosynthesis; L-methionine biosynthesis via salvage pathway; S-methyl-5-thio-alpha-D-ribose 1-phosphate from S-methyl-5'-thioadenosine (phosphorylase route): step 1/1. Its function is as follows. Catalyzes the reversible phosphorylation of S-methyl-5'-thioadenosine (MTA) to adenine and 5-methylthioribose-1-phosphate. Involved in the breakdown of MTA, a major by-product of polyamine biosynthesis. Responsible for the first step in the methionine salvage pathway after MTA has been generated from S-adenosylmethionine. Has broad substrate specificity with 6-aminopurine nucleosides as preferred substrates. This is S-methyl-5'-thioadenosine phosphorylase (Mtap) from Mus musculus (Mouse).